Here is a 790-residue protein sequence, read N- to C-terminus: MLTPIPLLQRFFSSPLSIKEILQACDRIGIEAECSNVFPDSLNTVVTGKVLSTSPHPDAERLSVAIVFDGKEERQIICGAPNCRAGIIVPVALPGAKIRNALGEVTTIKKSKIRGLESLGMCCGADELGFPHLQTGERGIFEFPENTPLGESACLLLAGASLECSLTPNLGHCASLLGLAREISFLSDTSLTIPEEFSFSPLPQESHSCDTHNLEASPVFYSVKISGLSWKQSPEDLQASLIALGQKPLNAIVDITNYVMLSLGQPLHAYDSQAVDQKSLHATTVRSPQQLTLLNKETYTLPEGALVVADQHNILGLAGVMGSAASAYSESTTEIILEAAYFLPQAVRKYQRTIQLHTEAAYRFTRGIDPQGVLPALYAAIHMIRALFPEAQISPIQKIGEYKSDPLSLNIRPKTLKRLLDLSLSPSEIAEKLSPLGFQTIAEESSVRVEVPLYRHDIQEETDLVEEICRTTPFVQKTQKILPTYTPIYALKRSLSTFLADSGLQQFFTCSLLDSEIAALSLQESSLIPVQNSSLKLRDSLLSGMLKSAATNLNRQAPYVYAFEIGNVYSKEHNQYREEEHIAILLTRQVMDDSWHVKTPLSFYTIKSWVEKLLCHAGVSIEDFVLQASQHPNFHPYRQAALYHKKQLLGVFGTLHPQLCKKSQIKHDVVFAELSLNVLLSLKKKTEPHYVPYPIYPSSSRDITITIDKDLPADLVRRELLSFESKWLESVHIVSVYQGKDVTSQSKNISLRLVFRDHERTLSGQEIEKEYERLTTLLDKNLANIGKGNS.

Positions 39 to 154 (PDSLNTVVTG…ENTPLGESAC (116 aa)) constitute a tRNA-binding domain. The region spanning 404 to 483 (SDPLSLNIRP…FVQKTQKILP (80 aa)) is the B5 domain. Mg(2+) contacts are provided by D457, D463, E466, and E467. Residues 694–790 (PIYPSSSRDI…NLANIGKGNS (97 aa)) enclose the FDX-ACB domain.

This sequence belongs to the phenylalanyl-tRNA synthetase beta subunit family. Type 1 subfamily. As to quaternary structure, tetramer of two alpha and two beta subunits. Requires Mg(2+) as cofactor.

The protein resides in the cytoplasm. It catalyses the reaction tRNA(Phe) + L-phenylalanine + ATP = L-phenylalanyl-tRNA(Phe) + AMP + diphosphate + H(+). The chain is Phenylalanine--tRNA ligase beta subunit (pheT) from Chlamydia muridarum (strain MoPn / Nigg).